The chain runs to 213 residues: Deoxyribose-phosphate aldolase (213 aa).

Asp89 (proton donor/acceptor) is an active-site residue. The Schiff-base intermediate with acetaldehyde role is filled by Lys151. Lys180 serves as the catalytic Proton donor/acceptor.

The protein belongs to the DeoC/FbaB aldolase family. DeoC type 1 subfamily.

The protein localises to the cytoplasm. The catalysed reaction is 2-deoxy-D-ribose 5-phosphate = D-glyceraldehyde 3-phosphate + acetaldehyde. It functions in the pathway carbohydrate degradation; 2-deoxy-D-ribose 1-phosphate degradation; D-glyceraldehyde 3-phosphate and acetaldehyde from 2-deoxy-alpha-D-ribose 1-phosphate: step 2/2. In terms of biological role, catalyzes a reversible aldol reaction between acetaldehyde and D-glyceraldehyde 3-phosphate to generate 2-deoxy-D-ribose 5-phosphate. This chain is Deoxyribose-phosphate aldolase, found in Finegoldia magna (strain ATCC 29328 / DSM 20472 / WAL 2508) (Peptostreptococcus magnus).